The sequence spans 233 residues: Orotidine 5'-phosphate decarboxylase (233 aa).

Residues aspartate 12, lysine 34, 61 to 70, threonine 116, arginine 181, glutamine 190, glycine 210, and arginine 211 each bind substrate; that span reads DWKLHDIGAT. Residue lysine 63 is the Proton donor of the active site.

Belongs to the OMP decarboxylase family. Type 1 subfamily. In terms of assembly, homodimer.

The catalysed reaction is orotidine 5'-phosphate + H(+) = UMP + CO2. The protein operates within pyrimidine metabolism; UMP biosynthesis via de novo pathway; UMP from orotate: step 2/2. Functionally, catalyzes the decarboxylation of orotidine 5'-monophosphate (OMP) to uridine 5'-monophosphate (UMP). In Caulobacter vibrioides (strain ATCC 19089 / CIP 103742 / CB 15) (Caulobacter crescentus), this protein is Orotidine 5'-phosphate decarboxylase.